Here is a 104-residue protein sequence, read N- to C-terminus: Pterin-4-alpha-carbinolamine dehydratase (104 aa).

N-acetylalanine is present on Ala-2. Substrate is bound by residues 61-63 (DHH) and 78-81 (STHE).

The protein belongs to the pterin-4-alpha-carbinolamine dehydratase family. In terms of assembly, homotetramer and homodimer. Heterotetramer with HNF1A; formed by a dimer of dimers. Interacts with HNF1B (via HNF-p1 domain); the interaction increases HNF1B transactivation activity.

The protein resides in the cytoplasm. Its subcellular location is the nucleus. It carries out the reaction (4aS,6R)-4a-hydroxy-L-erythro-5,6,7,8-tetrahydrobiopterin = (6R)-L-erythro-6,7-dihydrobiopterin + H2O. Involved in tetrahydrobiopterin biosynthesis. Seems to both prevent the formation of 7-pterins and accelerate the formation of quinonoid-BH2. Coactivator for HNF1A-dependent transcription. Regulates the dimerization of homeodomain protein HNF1A and enhances its transcriptional activity. Also acts as a coactivator for HNF1B-dependent transcription. The sequence is that of Pterin-4-alpha-carbinolamine dehydratase (PCBD1) from Bos taurus (Bovine).